The following is a 282-amino-acid chain: Protoheme IX farnesyltransferase (282 aa).

Transmembrane regions (helical) follow at residues 9-29 (LAKP…FLLA), 39-59 (LPLF…GCVF), 79-99 (LVTG…LLIL), 102-122 (LVLY…GFIV), 139-159 (VLGG…VVNI), 165-185 (LALF…IAML), 210-230 (IMLF…VLGS), 231-251 (ADLF…YKSI), and 261-281 (VFAK…CLTM).

The protein belongs to the UbiA prenyltransferase family. Protoheme IX farnesyltransferase subfamily.

Its subcellular location is the cell inner membrane. The enzyme catalyses heme b + (2E,6E)-farnesyl diphosphate + H2O = Fe(II)-heme o + diphosphate. Its pathway is porphyrin-containing compound metabolism; heme O biosynthesis; heme O from protoheme: step 1/1. Converts heme B (protoheme IX) to heme O by substitution of the vinyl group on carbon 2 of heme B porphyrin ring with a hydroxyethyl farnesyl side group. The protein is Protoheme IX farnesyltransferase of Francisella tularensis subsp. tularensis (strain FSC 198).